An 883-amino-acid chain; its full sequence is Protein SEY1 homolog (883 aa).

Over 1 to 795 the chain is Cytoplasmic; sequence MQMDRKTQII…ETGGKMSLKN (795 aa). The 247-residue stretch at 33 to 279 folds into the GB1/RHD3-type G domain; it reads GFNYNVVAIL…IPSDGFAHYC (247 aa). 43–50 contributes to the GTP binding site; sequence GSQSSGKS. The stretch at 673 to 693 forms a coiled coil; it reads LDEIMDVLKSKLDEISDNLSS. Residues 796 to 816 form a helical membrane-spanning segment; that stretch reads VPLFFWVILLILGWNELLFFI. At 817-819 the chain is on the lumenal side; it reads RFF. The chain crosses the membrane as a helical span at residues 820 to 840; that stretch reads FRLNIILPLFLAAAVILSTLF. Residues 841-883 lie on the Cytoplasmic side of the membrane; sequence FNGNMEVLSTINKVVFFLAKSSFGFYRQLQTMGEKVAQVPTAD.

Belongs to the TRAFAC class dynamin-like GTPase superfamily. GB1/RHD3 GTPase family. RHD3 subfamily.

The protein localises to the endoplasmic reticulum membrane. Probable GTP-binding protein involved in generating and maintaining the structure of the tubular endoplasmic reticulum network. This chain is Protein SEY1 homolog, found in Plasmodium knowlesi (strain H).